The following is a 420-amino-acid chain: Glucose-1-phosphate adenylyltransferase (420 aa).

Residues Y107, G172, 187-188 (EK), and S205 contribute to the alpha-D-glucose 1-phosphate site.

This sequence belongs to the bacterial/plant glucose-1-phosphate adenylyltransferase family. As to quaternary structure, homotetramer.

The catalysed reaction is alpha-D-glucose 1-phosphate + ATP + H(+) = ADP-alpha-D-glucose + diphosphate. The protein operates within glycan biosynthesis; glycogen biosynthesis. Functionally, involved in the biosynthesis of ADP-glucose, a building block required for the elongation reactions to produce glycogen. Catalyzes the reaction between ATP and alpha-D-glucose 1-phosphate (G1P) to produce pyrophosphate and ADP-Glc. This is Glucose-1-phosphate adenylyltransferase from Rhodopseudomonas palustris (strain TIE-1).